We begin with the raw amino-acid sequence, 310 residues long: Tyrosine recombinase XerC (310 aa).

Residues 11-97 enclose the Core-binding (CB) domain; the sequence is NSLQKPLSRF…SLRSFFDFLV (87 aa). Residues 118–298 enclose the Tyr recombinase domain; sequence PLPKNLDVDE…DFQHLAQAYD (181 aa). Active-site residues include Arg157, Lys181, His250, Arg253, and His276. The O-(3'-phospho-DNA)-tyrosine intermediate role is filled by Tyr285.

Belongs to the 'phage' integrase family. XerC subfamily. As to quaternary structure, forms a cyclic heterotetrameric complex composed of two molecules of XerC and two molecules of XerD.

It localises to the cytoplasm. Its function is as follows. Site-specific tyrosine recombinase, which acts by catalyzing the cutting and rejoining of the recombining DNA molecules. The XerC-XerD complex is essential to convert dimers of the bacterial chromosome into monomers to permit their segregation at cell division. It also contributes to the segregational stability of plasmids. This chain is Tyrosine recombinase XerC, found in Vibrio atlanticus (strain LGP32) (Vibrio splendidus (strain Mel32)).